The primary structure comprises 319 residues: Acetyl esterase (319 aa).

The short motif at 91-93 (HGG) is the Involved in the stabilization of the negatively charged intermediate by the formation of the oxyanion hole element. Active-site residues include Ser-165, Asp-262, and His-292.

Belongs to the 'GDXG' lipolytic enzyme family. In terms of assembly, homodimer. Interacts with MalT and MelA.

The protein resides in the cytoplasm. Its function is as follows. Displays esterase activity towards short chain fatty esters (acyl chain length of up to 8 carbons). Able to hydrolyze triacetylglycerol (triacetin) and tributyrylglycerol (tributyrin), but not trioleylglycerol (triolein) or cholesterol oleate. Negatively regulates MalT activity by antagonizing maltotriose binding. Inhibits MelA galactosidase activity. The polypeptide is Acetyl esterase (Shigella flexneri).